Reading from the N-terminus, the 262-residue chain is Zinc-finger homeodomain protein 6 (262 aa).

2 stretches are compositionally biased toward basic and acidic residues: residues 1-25 and 36-47; these read MEVREKKDEKMEMTRRKSSALDHHR and NKEKPTTKRNGS. The interval 1 to 93 is disordered; the sequence is MEVREKKDEK…ECQKNHAASS (93 aa). The ZF-HD dimerization-type; degenerate zinc finger occupies 82 to 131; that stretch reads YRECQKNHAASSGGHVVDGCGEFMSSGEEGTVESLLCAACDCHRSFHRKE. The segment at residues 198 to 261 is a DNA-binding region (homeobox); that stretch reads KKRFRTKFNE…NNKQAAKKKD (64 aa).

In terms of assembly, homo- and heterodimer with other ZFHD proteins. Interacts with MIF1 and MIF3; these interactions prevent nuclear localization and DNA-binding to inhibit transcription regulation activity. Binds to ZHD1, ZHD2, ZHD10 and ZHD11. As to expression, expressed in seedlings, roots, leaves, stems, flowers and inflorescence.

It is found in the nucleus. Its function is as follows. Putative transcription factor. The protein is Zinc-finger homeodomain protein 6 (ZHD6) of Arabidopsis thaliana (Mouse-ear cress).